Reading from the N-terminus, the 476-residue chain is MTADLALIWPELILTIGGLITLMLGTFMGDRQVGTYQLSALLTLAAAAAAAIALFGVETTVFSGTLSVDAFGGFAKLLIYAASFICILVAPRFFTGGMRAEYPTLILFAALGMGIMASSRDLMTLYVGLELNSLAAYVLASFMRSDERSSEAGLKYFVLGALASGMLLYGISLLYGFTGTTDFAGIAAAMGGEPGIGLIFGIVFVLSGLGFKISAVPFHMWTPDVYEGAPTPVTTFFASAPKVAAMALMARIVIDAMGPAVGAWQQIVIFLALASIILGAVGAIGQKNIKRLLAYSSINNVGFMLIGLAAGTQQGVEGVLTYLLVYLVTTLGAFLVVLQLRDEGGNQVESIPALAGLSQRRPGLAAAMSVFLFSLAGIPPLFGFWPKYLVFEAAVNANLVPLAVAGIVASVIGAFYYIAIIKTMYFDDKSDVEVTGGGNAVEGTIVAASALWLLAVGYLFIPALAVASAHAASVLF.

The next 14 membrane-spanning stretches (helical) occupy residues 5 to 25 (LALI…LMLG), 38 to 58 (LSAL…FGVE), 70 to 90 (AFGG…ILVA), 97 to 117 (GMRA…GIMA), 122 to 142 (LMTL…LASF), 157 to 177 (FVLG…LYGF), 196 to 218 (IGLI…AVPF), 231 to 253 (TPVT…ARIV), 264 to 284 (WQQI…VGAI), 292 to 312 (LLAY…AAGT), 318 to 338 (GVLT…LVVL), 364 to 384 (LAAA…LFGF), 401 to 421 (PLAV…IAII), and 445 to 465 (IVAA…PALA).

It belongs to the complex I subunit 2 family. In terms of assembly, NDH-1 is composed of 14 different subunits. Subunits NuoA, H, J, K, L, M, N constitute the membrane sector of the complex.

The protein resides in the cell inner membrane. It carries out the reaction a quinone + NADH + 5 H(+)(in) = a quinol + NAD(+) + 4 H(+)(out). In terms of biological role, NDH-1 shuttles electrons from NADH, via FMN and iron-sulfur (Fe-S) centers, to quinones in the respiratory chain. The immediate electron acceptor for the enzyme in this species is believed to be ubiquinone. Couples the redox reaction to proton translocation (for every two electrons transferred, four hydrogen ions are translocated across the cytoplasmic membrane), and thus conserves the redox energy in a proton gradient. This is NADH-quinone oxidoreductase subunit N from Sphingopyxis alaskensis (strain DSM 13593 / LMG 18877 / RB2256) (Sphingomonas alaskensis).